The chain runs to 155 residues: Protein-export protein SecB (155 aa).

Belongs to the SecB family. As to quaternary structure, homotetramer, a dimer of dimers. One homotetramer interacts with 1 SecA dimer.

It is found in the cytoplasm. In terms of biological role, one of the proteins required for the normal export of preproteins out of the cell cytoplasm. It is a molecular chaperone that binds to a subset of precursor proteins, maintaining them in a translocation-competent state. It also specifically binds to its receptor SecA. This is Protein-export protein SecB from Paramagnetospirillum magneticum (strain ATCC 700264 / AMB-1) (Magnetospirillum magneticum).